The sequence spans 893 residues: Pentatricopeptide repeat-containing protein At5g52850, chloroplastic (893 aa).

19 PPR repeats span residues 57–87 (NLDL…MSHR), 88–122 (TVFA…GTHP), 123–157 (NEFT…GFEG), 158–188 (NSVV…LQNA), 189–223 (DTIS…GVPP), 224–257 (NEFT…GIPL), 258–288 (NVVL…SGEQ), 289–323 (DVFL…GLQP), 324–358 (NNFT…GFED), 359–390 (STDV…MVSP), 391–425 (NVVS…EVEP), 426–460 (NVVT…HVDG), 461–491 (EMVV…MKRR), 492–526 (DNIT…GIRM), 527–561 (DQLS…GFSG), 562–592 (AASV…IATP), 593–627 (DVVS…ETEP), 628–658 (DSVT…MKKI), and 664–694 (QVEH…MHLK). Residues 699-774 (IFKTLLRACR…KLGKSTVEVQ (76 aa)) are type E motif. Residues 775 to 806 (GKVHSFVSEDVTRVDKTNGIYAEIESIKEEIK) form a type E(+) motif region. The interval 807–893 (RFGSPYRGNE…SCKREETSFV (87 aa)) is type DYW motif.

The protein belongs to the PPR family. PCMP-H subfamily.

It localises to the plastid. The protein resides in the chloroplast. This Arabidopsis thaliana (Mouse-ear cress) protein is Pentatricopeptide repeat-containing protein At5g52850, chloroplastic (PCMP-H31).